A 172-amino-acid chain; its full sequence is Putative phosphoesterase BCAH820_1309 (172 aa).

Catalysis depends on H34, which acts as the Proton donor. 2 consecutive short sequence motifs (HXTX) follow at residues 34–37 (HITL) and 115–118 (HLTI). H115 (proton acceptor) is an active-site residue.

The protein belongs to the 2H phosphoesterase superfamily. YjcG family.

In Bacillus cereus (strain AH820), this protein is Putative phosphoesterase BCAH820_1309.